The primary structure comprises 200 residues: Dephospho-CoA kinase (200 aa).

A DPCK domain is found at Val-3 to Ser-200. Gly-11 to Ser-16 contributes to the ATP binding site.

This sequence belongs to the CoaE family.

Its subcellular location is the cytoplasm. The catalysed reaction is 3'-dephospho-CoA + ATP = ADP + CoA + H(+). The protein operates within cofactor biosynthesis; coenzyme A biosynthesis; CoA from (R)-pantothenate: step 5/5. Its function is as follows. Catalyzes the phosphorylation of the 3'-hydroxyl group of dephosphocoenzyme A to form coenzyme A. The chain is Dephospho-CoA kinase from Nitrosospira multiformis (strain ATCC 25196 / NCIMB 11849 / C 71).